Reading from the N-terminus, the 101-residue chain is Movement protein (101 aa).

The chain crosses the membrane as a helical span at residues 30 to 50; it reads EVAILSFVALICIYLLYLWVL. A disordered region spans residues 80-101; sequence PIPNTLEPTAPVHPGPFVPGQG. A compositionally biased stretch (pro residues) spans 90-101; the sequence is PVHPGPFVPGQG.

The protein belongs to the mastrevirus movement protein family. Interacts with the capsid protein (CP). Part of a MP-CP-viral DNA complex.

It is found in the host membrane. In terms of biological role, involved in the viral transport within, and between cells. This is Movement protein from Avena sativa (Oat).